The primary structure comprises 227 residues: Uracil-DNA glycosylase (227 aa).

Asp68 serves as the catalytic Proton acceptor.

The protein belongs to the uracil-DNA glycosylase (UDG) superfamily. UNG family.

The protein resides in the cytoplasm. It carries out the reaction Hydrolyzes single-stranded DNA or mismatched double-stranded DNA and polynucleotides, releasing free uracil.. Its function is as follows. Excises uracil residues from the DNA which can arise as a result of misincorporation of dUMP residues by DNA polymerase or due to deamination of cytosine. The protein is Uracil-DNA glycosylase of Mycobacterium leprae (strain Br4923).